The primary structure comprises 816 residues: Sucrose synthase 1 (816 aa).

Residues 280-757 (MVFNVVIMSP…GLQRIEEKYT (478 aa)) form a GT-B glycosyltransferase region.

This sequence belongs to the glycosyltransferase 1 family. Plant sucrose synthase subfamily. Homotetramer or heterotetramer with SUS2. As to expression, expressed in root phloem and leaf mesophyll. Expressed in phloem tissues and aleurone layers of seeds and at lower levels in the pericarp and endosperm cells (at protein level). Predominantly expressed in elongating tissues including roots, developing leaves and internodes.

The catalysed reaction is an NDP-alpha-D-glucose + D-fructose = a ribonucleoside 5'-diphosphate + sucrose + H(+). Functionally, sucrose-cleaving enzyme that provides UDP-glucose and fructose for various metabolic pathways. The sequence is that of Sucrose synthase 1 (SUS1) from Oryza sativa subsp. japonica (Rice).